A 600-amino-acid polypeptide reads, in one-letter code: Aspartate--tRNA(Asp/Asn) ligase (600 aa).

Glu-174 contacts L-aspartate. The tract at residues 198 to 201 (QLFK) is aspartate. Arg-220 serves as a coordination point for L-aspartate. Residues 220–222 (RDE) and Gln-229 each bind ATP. L-aspartate is bound at residue His-457. Glu-491 is a binding site for ATP. Arg-498 is an L-aspartate binding site. 543 to 546 (GLDR) contacts ATP.

This sequence belongs to the class-II aminoacyl-tRNA synthetase family. Type 1 subfamily. As to quaternary structure, homodimer.

It is found in the cytoplasm. The enzyme catalyses tRNA(Asx) + L-aspartate + ATP = L-aspartyl-tRNA(Asx) + AMP + diphosphate. Aspartyl-tRNA synthetase with relaxed tRNA specificity since it is able to aspartylate not only its cognate tRNA(Asp) but also tRNA(Asn). Reaction proceeds in two steps: L-aspartate is first activated by ATP to form Asp-AMP and then transferred to the acceptor end of tRNA(Asp/Asn). This Burkholderia orbicola (strain MC0-3) protein is Aspartate--tRNA(Asp/Asn) ligase.